The sequence spans 643 residues: Threonine--tRNA ligase (643 aa).

The 61-residue stretch at 1–61 folds into the TGS domain; that stretch reads MPIITLPDGS…SEDSSLEIIT (61 aa). A catalytic region spans residues 243–534; the sequence is DHRRIGKALD…ITEEYAGFFP (292 aa). The Zn(2+) site is built by Cys-334, His-385, and His-511.

The protein belongs to the class-II aminoacyl-tRNA synthetase family. In terms of assembly, homodimer. It depends on Zn(2+) as a cofactor.

Its subcellular location is the cytoplasm. It catalyses the reaction tRNA(Thr) + L-threonine + ATP = L-threonyl-tRNA(Thr) + AMP + diphosphate + H(+). In terms of biological role, catalyzes the attachment of threonine to tRNA(Thr) in a two-step reaction: L-threonine is first activated by ATP to form Thr-AMP and then transferred to the acceptor end of tRNA(Thr). Also edits incorrectly charged L-seryl-tRNA(Thr). The chain is Threonine--tRNA ligase from Actinobacillus pleuropneumoniae serotype 7 (strain AP76).